Consider the following 190-residue polypeptide: Elongation factor P-like protein (190 aa).

Belongs to the elongation factor P family.

In Serratia proteamaculans (strain 568), this protein is Elongation factor P-like protein.